The chain runs to 314 residues: Acetyl-coenzyme A carboxylase carboxyl transferase subunit beta (314 aa).

A CoA carboxyltransferase N-terminal domain is found at 44-311 (LMNKCPHCGT…VETWQASSPL (268 aa)). Zn(2+) contacts are provided by cysteine 48, cysteine 51, cysteine 67, and cysteine 70. A C4-type zinc finger spans residues 48–70 (CPHCGTIHYSKDLEKNLRVCKGC).

The protein belongs to the AccD/PCCB family. As to quaternary structure, acetyl-CoA carboxylase is a heterohexamer composed of biotin carboxyl carrier protein (AccB), biotin carboxylase (AccC) and two subunits each of ACCase subunit alpha (AccA) and ACCase subunit beta (AccD). Zn(2+) serves as cofactor.

Its subcellular location is the cytoplasm. The catalysed reaction is N(6)-carboxybiotinyl-L-lysyl-[protein] + acetyl-CoA = N(6)-biotinyl-L-lysyl-[protein] + malonyl-CoA. The protein operates within lipid metabolism; malonyl-CoA biosynthesis; malonyl-CoA from acetyl-CoA: step 1/1. In terms of biological role, component of the acetyl coenzyme A carboxylase (ACC) complex. Biotin carboxylase (BC) catalyzes the carboxylation of biotin on its carrier protein (BCCP) and then the CO(2) group is transferred by the transcarboxylase to acetyl-CoA to form malonyl-CoA. This chain is Acetyl-coenzyme A carboxylase carboxyl transferase subunit beta, found in Brevibacillus brevis (strain 47 / JCM 6285 / NBRC 100599).